We begin with the raw amino-acid sequence, 1110 residues long: Nitric oxide synthase 3 (1110 aa).

Positions 1-74 are disordered; sequence MGNFKSVGQE…PPEGPKFPRV (74 aa). Gly residues predominate over residues 15–27; it reads CGLGLGLGLGLCG. Low complexity predominate over residues 31-40; sequence PASPAPVSAS. Residues 47-69 show a composition bias toward pro residues; that stretch reads SSPPLPLPAPEHSPPLTRPPEGP. 2 residues coordinate Zn(2+): C97 and C102. The interval 101 to 489 is interaction with NOSIP; sequence RCLGSLVFPR…PDPWKGSGTK (389 aa). Position 105 (S105) interacts with (6R)-L-erythro-5,6,7,8-tetrahydrobiopterin. At S117 the chain carries Phosphoserine. Position 187 (C187) interacts with heme b. L-arginine contacts are provided by Q250, W359, Y360, and E364. R368 contacts (6R)-L-erythro-5,6,7,8-tetrahydrobiopterin. Position 369 (N369) interacts with L-arginine. The (6R)-L-erythro-5,6,7,8-tetrahydrobiopterin site is built by A449, W450, and F463. Y478 contributes to the heme b binding site. At T498 the chain carries Phosphothreonine. Residues S529, E530, T531, R533, S575, and T576 each contribute to the FMN site. Residues S618, S636, and S641 each carry the phosphoserine modification. The FMN site is built by S657, C664, E690, and Q694. R779 serves as a coordination point for NADP(+). H801 provides a ligand contact to FAD. The tract at residues 821-848 is disordered; that stretch reads EDPPPPAESVAVEQLEKGSPGGPPPGWV. The residue at position 839 (S839) is a Phosphoserine. 9 residues coordinate FAD: R941, Y943, S944, T959, A961, Y965, V978, C979, and S980. Positions 1019, 1052, 1081, 1082, and 1088 each coordinate NADP(+).

The protein belongs to the NOS family. In terms of assembly, homodimer. Interacts with NOSIP and NOSTRIN. Interacts with HSP90AB1. Forms a complex with ASL, ASS1 and SLC7A1; the complex regulates cell-autonomous L-arginine synthesis and citrulline recycling while channeling extracellular L-arginine to nitric oxide synthesis pathway. The cofactor is heme b. FAD serves as cofactor. FMN is required as a cofactor. Requires (6R)-L-erythro-5,6,7,8-tetrahydrobiopterin as cofactor.

Its subcellular location is the membrane. It localises to the caveola. The protein localises to the cytoplasm. The protein resides in the cytoskeleton. It is found in the golgi apparatus. Its subcellular location is the cell membrane. The catalysed reaction is 2 L-arginine + 3 NADPH + 4 O2 + H(+) = 2 L-citrulline + 2 nitric oxide + 3 NADP(+) + 4 H2O. Its activity is regulated as follows. Stimulated by calcium/calmodulin. Inhibited by NOSIP and NOSTRIN. Functionally, produces nitric oxide (NO) which is implicated in vascular smooth muscle relaxation through a cGMP-mediated signal transduction pathway. NO mediates vascular endothelial growth factor (VEGF)-induced angiogenesis in coronary vessels and promotes blood clotting through the activation of platelets. This chain is Nitric oxide synthase 3 (NOS3), found in Cavia porcellus (Guinea pig).